A 117-amino-acid chain; its full sequence is UPF0231 protein HI_1724 (117 aa).

It belongs to the UPF0231 family.

This Haemophilus influenzae (strain ATCC 51907 / DSM 11121 / KW20 / Rd) protein is UPF0231 protein HI_1724.